A 114-amino-acid polypeptide reads, in one-letter code: Large ribosomal subunit protein bL19 (114 aa).

The protein belongs to the bacterial ribosomal protein bL19 family.

This protein is located at the 30S-50S ribosomal subunit interface and may play a role in the structure and function of the aminoacyl-tRNA binding site. The polypeptide is Large ribosomal subunit protein bL19 (Bacillus cytotoxicus (strain DSM 22905 / CIP 110041 / 391-98 / NVH 391-98)).